The chain runs to 642 residues: Threonine--tRNA ligase (642 aa).

Residues 1-61 enclose the TGS domain; sequence MPVITLPDGS…ETDAELSIIT (61 aa). The catalytic stretch occupies residues 243–534; it reads DHRKIGKQLD…LIEEYAGRFP (292 aa). Zn(2+) contacts are provided by Cys334, His385, and His511.

The protein belongs to the class-II aminoacyl-tRNA synthetase family. Homodimer. It depends on Zn(2+) as a cofactor.

The protein resides in the cytoplasm. It catalyses the reaction tRNA(Thr) + L-threonine + ATP = L-threonyl-tRNA(Thr) + AMP + diphosphate + H(+). Its function is as follows. Catalyzes the attachment of threonine to tRNA(Thr) in a two-step reaction: L-threonine is first activated by ATP to form Thr-AMP and then transferred to the acceptor end of tRNA(Thr). Also edits incorrectly charged L-seryl-tRNA(Thr). In Shewanella baltica (strain OS195), this protein is Threonine--tRNA ligase.